We begin with the raw amino-acid sequence, 108 residues long: uncharacterized protein (108 aa).

The next 3 helical transmembrane spans lie at 26 to 46, 54 to 74, and 84 to 104; these read GAVY…ALII, LMTL…PLIF, and INYQ…CIYM.

Its subcellular location is the cell membrane. This is an uncharacterized protein from Methanocaldococcus jannaschii (strain ATCC 43067 / DSM 2661 / JAL-1 / JCM 10045 / NBRC 100440) (Methanococcus jannaschii).